Here is a 71-residue protein sequence, read N- to C-terminus: MKRILVCPVCKSKEVELDAGGYTGKYYCKNCGYVGSFILEMTEGEYREMMEKEKFERKEDEKSKPKGVRED.

The interval 52–71 (KEKFERKEDEKSKPKGVRED) is disordered.

This is an uncharacterized protein from Archaeoglobus fulgidus (strain ATCC 49558 / DSM 4304 / JCM 9628 / NBRC 100126 / VC-16).